The sequence spans 122 residues: Small ribosomal subunit protein uS13 (122 aa).

The tract at residues 97–122 (PVRGQRTHTNARTRKGPAKAIAGKKK) is disordered.

It belongs to the universal ribosomal protein uS13 family. Part of the 30S ribosomal subunit. Forms a loose heterodimer with protein S19. Forms two bridges to the 50S subunit in the 70S ribosome.

Its function is as follows. Located at the top of the head of the 30S subunit, it contacts several helices of the 16S rRNA. In the 70S ribosome it contacts the 23S rRNA (bridge B1a) and protein L5 of the 50S subunit (bridge B1b), connecting the 2 subunits; these bridges are implicated in subunit movement. Contacts the tRNAs in the A and P-sites. The chain is Small ribosomal subunit protein uS13 from Bartonella henselae (strain ATCC 49882 / DSM 28221 / CCUG 30454 / Houston 1) (Rochalimaea henselae).